The primary structure comprises 212 residues: Probable GTP-binding protein EngB (212 aa).

An EngB-type G domain is found at glycine 27–glycine 211. Residues glycine 35–serine 42, glycine 62–glutamate 66, aspartate 89–glycine 92, threonine 156–aspartate 159, and threonine 190–serine 192 contribute to the GTP site. Positions 42 and 64 each coordinate Mg(2+).

Belongs to the TRAFAC class TrmE-Era-EngA-EngB-Septin-like GTPase superfamily. EngB GTPase family. It depends on Mg(2+) as a cofactor.

Its function is as follows. Necessary for normal cell division and for the maintenance of normal septation. The sequence is that of Probable GTP-binding protein EngB from Mesorhizobium japonicum (strain LMG 29417 / CECT 9101 / MAFF 303099) (Mesorhizobium loti (strain MAFF 303099)).